The following is a 295-amino-acid chain: sn-glycerol-3-phosphate transport system permease protein UgpA (295 aa).

Residues M1–R11 lie on the Cytoplasmic side of the membrane. A helical membrane pass occupies residues W12–P32. Over A33–A80 the chain is Periplasmic. One can recognise an ABC transmembrane type-1 domain in the interval I76–Q284. The helical transmembrane segment at L81–V101 threads the bilayer. At R102–T109 the chain is on the cytoplasmic side. A helical transmembrane segment spans residues L110–F130. At N131–A157 the chain is on the periplasmic side. Residues M158 to F178 traverse the membrane as a helical segment. At A179 to S207 the chain is on the cytoplasmic side. A helical transmembrane segment spans residues L208–F228. At D229–D262 the chain is on the periplasmic side. A helical transmembrane segment spans residues L263 to V283. At Q284–Q295 the chain is on the cytoplasmic side.

It belongs to the binding-protein-dependent transport system permease family. UgpAE subfamily. The complex is composed of two ATP-binding proteins (UgpC), two transmembrane proteins (UgpA and UgpE) and a solute-binding protein (UgpB).

Its subcellular location is the cell inner membrane. Functionally, part of the ABC transporter complex UgpBAEC involved in sn-glycerol-3-phosphate (G3P) import. Probably responsible for the translocation of the substrate across the membrane. This chain is sn-glycerol-3-phosphate transport system permease protein UgpA (ugpA), found in Salmonella choleraesuis (strain SC-B67).